We begin with the raw amino-acid sequence, 305 residues long: Heterogeneous nuclear ribonucleoprotein A0 (305 aa).

Methionine 1 carries the N-acetylmethionine modification. The RRM 1 domain maps to 7–86 (CKLFIGGLNV…VELKRAVSRE (80 aa)). Phosphoserine is present on serine 68. Lysine 80 is covalently cross-linked (Glycyl lysine isopeptide (Lys-Gly) (interchain with G-Cter in SUMO2)). At serine 84 the chain carries Phosphoserine; by MAPKAPK2. Glycyl lysine isopeptide (Lys-Gly) (interchain with G-Cter in SUMO2) cross-links involve residues lysine 96, lysine 98, lysine 99, and lysine 106. Residues 98–175 (KKLFVGGLKG…HRVEVKKAVP (78 aa)) enclose the RRM 2 domain. Lysine 133 is subject to N6-acetyllysine. Arginine 139 is subject to Omega-N-methylarginine. Residues lysine 154, lysine 159, lysine 172, and lysine 176 each participate in a glycyl lysine isopeptide (Lys-Gly) (interchain with G-Cter in SUMO2) cross-link. 2 disordered regions span residues 174-214 (VPKE…KGGG) and 262-305 (QSSY…GSSF). Composition is skewed to gly residues over residues 181-200 (SGGG…GRGR) and 269-281 (KSGG…GSSW). Serine 188 is subject to Phosphoserine. Arginine 284 is subject to Omega-N-methylarginine. Gly residues predominate over residues 290 to 305 (YRGGYGGGGGYGGSSF). The residue at position 291 (arginine 291) is an Asymmetric dimethylarginine; alternate. A Dimethylated arginine; alternate modification is found at arginine 291. Arginine 291 is modified (omega-N-methylarginine; alternate).

In terms of processing, phosphorylated at Ser-84 by MAPKAPK2 in response to LPS treatment, promoting stabilization of GADD45A mRNA. Post-translationally, arg-291 is dimethylated, probably to asymmetric dimethylarginine.

It localises to the nucleus. Functionally, mRNA-binding component of ribonucleosomes. Specifically binds AU-rich element (ARE)-containing mRNAs. Involved in post-transcriptional regulation of cytokines mRNAs. This is Heterogeneous nuclear ribonucleoprotein A0 (HNRNPA0) from Homo sapiens (Human).